Here is a 940-residue protein sequence, read N- to C-terminus: Valine--tRNA ligase (940 aa).

Positions 47–57 match the 'HIGH' region motif; that stretch reads PNVTGILHMGH. The 'KMSKS' region signature appears at 564–568; sequence KLSKS. ATP is bound at residue K567. Residues 872–938 are a coiled coil; the sequence is PMEHITKERN…LQSILDKLAS (67 aa).

The protein belongs to the class-I aminoacyl-tRNA synthetase family. ValS type 1 subfamily. In terms of assembly, monomer.

It localises to the cytoplasm. It carries out the reaction tRNA(Val) + L-valine + ATP = L-valyl-tRNA(Val) + AMP + diphosphate. Catalyzes the attachment of valine to tRNA(Val). As ValRS can inadvertently accommodate and process structurally similar amino acids such as threonine, to avoid such errors, it has a 'posttransfer' editing activity that hydrolyzes mischarged Thr-tRNA(Val) in a tRNA-dependent manner. This is Valine--tRNA ligase from Chlamydia caviae (strain ATCC VR-813 / DSM 19441 / 03DC25 / GPIC) (Chlamydophila caviae).